A 212-amino-acid chain; its full sequence is Ribosomal RNA large subunit methyltransferase E (212 aa).

Positions 1 to 26 are disordered; sequence MPAERPSVSQKPKNPYKRPDAFTKAA. 5 residues coordinate S-adenosyl-L-methionine: G63, W65, D83, D101, and D122. The active-site Proton acceptor is K162.

The protein belongs to the class I-like SAM-binding methyltransferase superfamily. RNA methyltransferase RlmE family.

It is found in the cytoplasm. It catalyses the reaction uridine(2552) in 23S rRNA + S-adenosyl-L-methionine = 2'-O-methyluridine(2552) in 23S rRNA + S-adenosyl-L-homocysteine + H(+). Its function is as follows. Specifically methylates the uridine in position 2552 of 23S rRNA at the 2'-O position of the ribose in the fully assembled 50S ribosomal subunit. The protein is Ribosomal RNA large subunit methyltransferase E of Sorangium cellulosum (strain So ce56) (Polyangium cellulosum (strain So ce56)).